The primary structure comprises 209 residues: Pyridoxine/pyridoxamine 5'-phosphate oxidase (209 aa).

Substrate contacts are provided by residues 7–10 (REDY) and lysine 64. FMN contacts are provided by residues 59-64 (RIVLLK), 74-75 (FT), arginine 80, and lysine 81. Positions 121, 125, and 129 each coordinate substrate. FMN-binding positions include 138 to 139 (QS) and tryptophan 182. 188 to 190 (RLH) contacts substrate. Arginine 192 lines the FMN pocket.

It belongs to the pyridoxamine 5'-phosphate oxidase family. As to quaternary structure, homodimer. FMN serves as cofactor.

It carries out the reaction pyridoxamine 5'-phosphate + O2 + H2O = pyridoxal 5'-phosphate + H2O2 + NH4(+). It catalyses the reaction pyridoxine 5'-phosphate + O2 = pyridoxal 5'-phosphate + H2O2. The protein operates within cofactor metabolism; pyridoxal 5'-phosphate salvage; pyridoxal 5'-phosphate from pyridoxamine 5'-phosphate: step 1/1. It participates in cofactor metabolism; pyridoxal 5'-phosphate salvage; pyridoxal 5'-phosphate from pyridoxine 5'-phosphate: step 1/1. Functionally, catalyzes the oxidation of either pyridoxine 5'-phosphate (PNP) or pyridoxamine 5'-phosphate (PMP) into pyridoxal 5'-phosphate (PLP). The chain is Pyridoxine/pyridoxamine 5'-phosphate oxidase from Actinobacillus pleuropneumoniae serotype 3 (strain JL03).